A 134-amino-acid chain; its full sequence is MKSVFTISASLAISLMLCCTAQANDHKLLGVIAMPRNETNDLALKLPVCRIVKRIQLSADHGDLQLSGASVYFKAARSASQSLNIPSEIKEGQTTDWININSDNDNKRCVSKITFSGHTVNSSDMATLKIIGDD.

The signal sequence occupies residues M1–A23.

Belongs to the UPF0412 family.

This Shigella dysenteriae serotype 1 (strain Sd197) protein is UPF0412 protein YaaI.